The chain runs to 151 residues: Testis-expressed protein 29 (151 aa).

Residues 1–56 (MEYVLEVKNSPRHLLKQFTVCDVPLYDICDYNVSRDRCQELGCCFYEGVCYKKAVP) are Extracellular-facing. A helical transmembrane segment spans residues 57 to 77 (IYIHVFSALIVIIAGAFVITI). Topologically, residues 78-151 (IYRVIQESRK…TITEAEETED (74 aa)) are cytoplasmic. Residues 100-151 (KSSEKAELASSSSKLGLKPASPGPPSAGPSMKSDEDKDDVTGTITEAEETED) are disordered. Residues 107 to 119 (LASSSSKLGLKPA) are compositionally biased toward low complexity.

The protein localises to the membrane. In Homo sapiens (Human), this protein is Testis-expressed protein 29 (TEX29).